The following is a 718-amino-acid chain: MFNQHSVEIDWGGRPLKLETGKIARQADGAVVATYGETVVLATVVAAKSPREGVDFLPLTVDYQEKTYAAGRIPGGYFKREGRPTEKETLVSRLIDRPVRPLFADGWRNETQVIVTVLSHDMENDPDILAMVAASAALTLSGAPFKGPIGAARVGFINDEYVLNPTLDEIVDTQLDLVVAGTADAVLMVESEAKELSEEIMLKAVMFGHRHFQPVIDAIIELAEKAAKEPRELKVIDDTEIEKEMLGLVEQDLRAAYAIPVKQDRYAAVGKVKEKALAHFFPEGQEPKYDKLRVAGVFKELEAKIVRWNILDTGKRIDGRDVKTVRNIVAEAGVLPRAHGSALFTRGETQAMVVTTLGTGEDEQYIDSLAGTYKETFLLHYNFPPYSVGETGRLGGAKRREIGHGKLAWRAIRPVLPPHHEFPYTIRVVSEITESNGSSSMASVCGASLSLMDAGVPLKRPTAGIAMGLILEGERYAVLSDILGDEDHLGDMDFKVAGTEAGITSLQMDIKIAGITEEIMKVALGQAKDGRIHILGEMSKALDRARAELGEHAPRIETFKIPTDKIREVIGTGGKVIREIVEKTGAKVNIEDDGTVKVASSDGESIKAAIKWIKSIASDPEVGEIYEGTVVKVMEFGAFVNFFGAKDGLVHISQLAAGRVQKTSDVVKEGAKVKVKLLGFDDRGKTRLSMKVVDQETGEDLEAKQKAEGDAPREAAGE.

Residues Asp-487 and Asp-493 each coordinate Mg(2+). In terms of domain architecture, KH spans 554–613 (PRIETFKIPTDKIREVIGTGGKVIREIVEKTGAKVNIEDDGTVKVASSDGESIKAAIKWI). The 69-residue stretch at 623-691 (GEIYEGTVVK…DRGKTRLSMK (69 aa)) folds into the S1 motif domain. Positions 692–718 (VVDQETGEDLEAKQKAEGDAPREAAGE) are disordered. Positions 701-718 (LEAKQKAEGDAPREAAGE) are enriched in basic and acidic residues.

The protein belongs to the polyribonucleotide nucleotidyltransferase family. It depends on Mg(2+) as a cofactor.

Its subcellular location is the cytoplasm. The catalysed reaction is RNA(n+1) + phosphate = RNA(n) + a ribonucleoside 5'-diphosphate. Its function is as follows. Involved in mRNA degradation. Catalyzes the phosphorolysis of single-stranded polyribonucleotides processively in the 3'- to 5'-direction. This Nitrobacter winogradskyi (strain ATCC 25391 / DSM 10237 / CIP 104748 / NCIMB 11846 / Nb-255) protein is Polyribonucleotide nucleotidyltransferase.